A 323-amino-acid polypeptide reads, in one-letter code: MRQVTLYRYSVPMEAGVVLRNQRLKTRDGLIVRLQEDERLGWGEIAPLPEFSLETLAEAESAALEQLAAWAAGHAFSEDLPPSVAFGLSCAQAELDQHLPQAADYRKAPLCNGDPDELFEMLQAMPGEKVAKVKVGLYEAVRDGMIVNVLLEALPDLKLRLDANRSWTRAKADGFARYVAPSLRSRIAFLEEPCKTREESREFARETGINIAWDESVREADFRVEAEPGVSAIVIKPTLVGSLARCQQLVQETHQAGLTAVISSSIESSLGLTQLARLASWLTPDTIPGLDTLDLMQTQVIQRWPDSALPLLAAEQLDVVWQS.

K134 functions as the Proton donor in the catalytic mechanism. Mg(2+) contacts are provided by D162, E191, and D214. The Proton acceptor role is filled by K236.

The protein belongs to the mandelate racemase/muconate lactonizing enzyme family. MenC type 1 subfamily. A divalent metal cation is required as a cofactor.

The enzyme catalyses (1R,6R)-6-hydroxy-2-succinyl-cyclohexa-2,4-diene-1-carboxylate = 2-succinylbenzoate + H2O. It functions in the pathway quinol/quinone metabolism; 1,4-dihydroxy-2-naphthoate biosynthesis; 1,4-dihydroxy-2-naphthoate from chorismate: step 4/7. Its pathway is quinol/quinone metabolism; menaquinone biosynthesis. Its function is as follows. Converts 2-succinyl-6-hydroxy-2,4-cyclohexadiene-1-carboxylate (SHCHC) to 2-succinylbenzoate (OSB). The chain is o-succinylbenzoate synthase from Pectobacterium atrosepticum (strain SCRI 1043 / ATCC BAA-672) (Erwinia carotovora subsp. atroseptica).